A 376-amino-acid polypeptide reads, in one-letter code: UDP-N-acetylglucosamine 2-epimerase (376 aa).

Substrate contacts are provided by residues Arg-10, Lys-15, Asp-95, Glu-117, His-213, Gln-271, Phe-276, 290-292, Glu-296, and Arg-313; that span reads SGG.

Belongs to the UDP-N-acetylglucosamine 2-epimerase family. In terms of assembly, homodimer.

The protein resides in the cytoplasm. It carries out the reaction UDP-N-acetyl-alpha-D-glucosamine = UDP-N-acetyl-alpha-D-mannosamine. It functions in the pathway bacterial outer membrane biogenesis; enterobacterial common antigen biosynthesis. In terms of biological role, catalyzes the reversible epimerization at C-2 of UDP-N-acetylglucosamine (UDP-GlcNAc) and thereby provides bacteria with UDP-N-acetylmannosamine (UDP-ManNAc), the activated donor of ManNAc residues. The chain is UDP-N-acetylglucosamine 2-epimerase from Salmonella typhimurium (strain LT2 / SGSC1412 / ATCC 700720).